The chain runs to 357 residues: Large ribosomal subunit protein uL10 (357 aa).

Residues 311-357 (MVSRSAEAAERKEKEEEEEEEAEEEEAEEEEEEEEEEAAAGLGALFG) are disordered. Residues 325 to 348 (EEEEEEEAEEEEAEEEEEEEEEEA) are compositionally biased toward acidic residues.

Belongs to the universal ribosomal protein uL10 family. Part of the 50S ribosomal subunit. Forms part of the ribosomal stalk which helps the ribosome interact with GTP-bound translation factors. Forms a heptameric L10(L12)2(L12)2(L12)2 complex, where L10 forms an elongated spine to which the L12 dimers bind in a sequential fashion.

Functionally, forms part of the ribosomal stalk, playing a central role in the interaction of the ribosome with GTP-bound translation factors. This Methanopyrus kandleri (strain AV19 / DSM 6324 / JCM 9639 / NBRC 100938) protein is Large ribosomal subunit protein uL10.